The sequence spans 301 residues: RNA polymerase II holoenzyme cyclin-like subunit (301 aa).

In terms of domain architecture, Cyclin N-terminal spans 53–142 (QQLIKLGKRT…LGECEFALIS (90 aa)).

Belongs to the cyclin family. Cyclin C subfamily. Component of the srb8-11 complex, a regulatory module of the Mediator complex.

Its subcellular location is the nucleus. Its function is as follows. Component of the srb8-11 complex. The srb8-11 complex is a regulatory module of the Mediator complex which is itself involved in regulation of basal and activated RNA polymerase II-dependent transcription. The srb8-11 complex may be involved in the transcriptional repression of a subset of genes regulated by Mediator. It may inhibit the association of the Mediator complex with RNA polymerase II to form the holoenzyme complex. The srb8-11 complex phosphorylates the C-terminal domain (CTD) of the largest subunit of RNA polymerase II. The polypeptide is RNA polymerase II holoenzyme cyclin-like subunit (ssn8) (Aspergillus terreus (strain NIH 2624 / FGSC A1156)).